Consider the following 445-residue polypeptide: Methylthioribose-1-phosphate isomerase (445 aa).

The active-site Proton donor is D286.

Belongs to the eIF-2B alpha/beta/delta subunits family. MtnA subfamily.

The protein localises to the cytoplasm. It localises to the nucleus. The enzyme catalyses 5-(methylsulfanyl)-alpha-D-ribose 1-phosphate = 5-(methylsulfanyl)-D-ribulose 1-phosphate. Its pathway is amino-acid biosynthesis; L-methionine biosynthesis via salvage pathway; L-methionine from S-methyl-5-thio-alpha-D-ribose 1-phosphate: step 1/6. In terms of biological role, catalyzes the interconversion of methylthioribose-1-phosphate (MTR-1-P) into methylthioribulose-1-phosphate (MTRu-1-P). The polypeptide is Methylthioribose-1-phosphate isomerase (mri1) (Sclerotinia sclerotiorum (strain ATCC 18683 / 1980 / Ss-1) (White mold)).